Consider the following 376-residue polypeptide: N-acetyldiaminopimelate deacetylase (376 aa).

Aspartate 69 is a catalytic residue. Glutamate 128 serves as the catalytic Proton acceptor.

It belongs to the peptidase M20A family. N-acetyldiaminopimelate deacetylase subfamily.

The catalysed reaction is N-acetyl-(2S,6S)-2,6-diaminopimelate + H2O = (2S,6S)-2,6-diaminopimelate + acetate. The protein operates within amino-acid biosynthesis; L-lysine biosynthesis via DAP pathway; LL-2,6-diaminopimelate from (S)-tetrahydrodipicolinate (acetylase route): step 3/3. Its function is as follows. Catalyzes the conversion of N-acetyl-diaminopimelate to diaminopimelate and acetate. This Streptococcus pneumoniae (strain JJA) protein is N-acetyldiaminopimelate deacetylase.